We begin with the raw amino-acid sequence, 105 residues long: UPF0235 protein RAF_ORF1191 (105 aa).

This sequence belongs to the UPF0235 family.

The chain is UPF0235 protein RAF_ORF1191 from Rickettsia africae (strain ESF-5).